The sequence spans 475 residues: Zinc finger protein 296 (475 aa).

The interval 1 to 78 is disordered; the sequence is MSRRKAGSAP…SPGPMPAGAA (78 aa). Residue Lys35 forms a Glycyl lysine isopeptide (Lys-Gly) (interchain with G-Cter in SUMO2) linkage. 3 C2H2-type zinc fingers span residues 157–180, 231–253, and 259–281; these read LSCLRCGKQFTVAWKLLRHAQWDH, PTCPVCKKTLSSFSNLKVHMRSH, and YACDQCPYACAQSSKLNRHKKTH. The tract at residues 275–385 is disordered; sequence NRHKKTHRQV…KSGGKSRGPG (111 aa). Composition is skewed to low complexity over residues 295–313 and 326–338; these read SQEQASAAPPEPAVHAAAP and GAAATAGVQEPGA. Over residues 339 to 351 the composition is skewed to gly residues; that stretch reads PGSGAQAGPGGDT. Positions 354–367 are enriched in polar residues; it reads AITTEQRTDPANSQ. C2H2-type zinc fingers lie at residues 386 to 408, 414 to 436, and 445 to 468; these read GSCEFCGKHFTNSSNLTVHRRSH, YTCEFCNYACAQSSKLNRHRRMH, and FECPHCHVPFGLRATLDKHLRQKH.

This sequence belongs to the krueppel C2H2-type zinc-finger protein family. As to quaternary structure, interacts with KLF4.

The protein localises to the nucleus. Its function is as follows. May be a transcriptional corepressor with KLF4. The chain is Zinc finger protein 296 (ZNF296) from Homo sapiens (Human).